Here is a 366-residue protein sequence, read N- to C-terminus: Tetraacyldisaccharide 4'-kinase (366 aa).

Residue 62-69 participates in ATP binding; that stretch reads RVGGTGKT.

Belongs to the LpxK family.

It catalyses the reaction a lipid A disaccharide + ATP = a lipid IVA + ADP + H(+). It participates in glycolipid biosynthesis; lipid IV(A) biosynthesis; lipid IV(A) from (3R)-3-hydroxytetradecanoyl-[acyl-carrier-protein] and UDP-N-acetyl-alpha-D-glucosamine: step 6/6. Functionally, transfers the gamma-phosphate of ATP to the 4'-position of a tetraacyldisaccharide 1-phosphate intermediate (termed DS-1-P) to form tetraacyldisaccharide 1,4'-bis-phosphate (lipid IVA). This chain is Tetraacyldisaccharide 4'-kinase, found in Polynucleobacter necessarius subsp. necessarius (strain STIR1).